The primary structure comprises 628 residues: Kinesin-like protein tea2 (628 aa).

The interval serine 2 to glycine 122 is interaction with mal3. Serine 82 carries the post-translational modification Phosphoserine. Residues glycine 132–leucine 460 enclose the Kinesin motor domain. Glycine 218–threonine 225 lines the ATP pocket. The stretch at leucine 530 to isoleucine 557 forms a coiled coil. Residues valine 588–serine 628 form a disordered region. The span at threonine 589–glutamate 602 shows a compositional bias: polar residues. Over residues threonine 603–valine 620 the composition is skewed to basic and acidic residues.

The protein belongs to the TRAFAC class myosin-kinesin ATPase superfamily. Kinesin family. In terms of assembly, interacts with mal3 and tip1.

It is found in the cytoplasm. It localises to the cytoskeleton. Functionally, promotes microtubule growth, possibly through interactions with the microtubule end, and is important for establishing and maintaining polarized growth along the long axis of the cell. Acts as a kinesin motor protein that moves along microtubules and is required for proper localization of tea1 and tip1 to the cell tips and microtubules, respectively. ATPase activity stimulated via interaction with mal3. This is Kinesin-like protein tea2 from Schizosaccharomyces pombe (strain 972 / ATCC 24843) (Fission yeast).